A 120-amino-acid chain; its full sequence is NAD(P)H-quinone oxidoreductase subunit 3, chloroplastic (120 aa).

3 helical membrane passes run 7-27, 64-84, and 89-109; these read YDYF…IFSL, MFAL…PWAM, and FGIS…IGLV.

The protein belongs to the complex I subunit 3 family. As to quaternary structure, NDH is composed of at least 16 different subunits, 5 of which are encoded in the nucleus.

It is found in the plastid. The protein resides in the chloroplast thylakoid membrane. It carries out the reaction a plastoquinone + NADH + (n+1) H(+)(in) = a plastoquinol + NAD(+) + n H(+)(out). The catalysed reaction is a plastoquinone + NADPH + (n+1) H(+)(in) = a plastoquinol + NADP(+) + n H(+)(out). Its function is as follows. NDH shuttles electrons from NAD(P)H:plastoquinone, via FMN and iron-sulfur (Fe-S) centers, to quinones in the photosynthetic chain and possibly in a chloroplast respiratory chain. The immediate electron acceptor for the enzyme in this species is believed to be plastoquinone. Couples the redox reaction to proton translocation, and thus conserves the redox energy in a proton gradient. The protein is NAD(P)H-quinone oxidoreductase subunit 3, chloroplastic of Marchantia polymorpha (Common liverwort).